The following is an 82-amino-acid chain: Putative membrane protein insertion efficiency factor (82 aa).

Belongs to the UPF0161 family.

Its subcellular location is the cell inner membrane. Its function is as follows. Could be involved in insertion of integral membrane proteins into the membrane. This Colwellia psychrerythraea (strain 34H / ATCC BAA-681) (Vibrio psychroerythus) protein is Putative membrane protein insertion efficiency factor.